A 277-amino-acid chain; its full sequence is Putative phosphoenolpyruvate synthase regulatory protein (277 aa).

Gly-157–Thr-164 contacts ADP.

The protein belongs to the pyruvate, phosphate/water dikinase regulatory protein family. PSRP subfamily.

It carries out the reaction [pyruvate, water dikinase] + ADP = [pyruvate, water dikinase]-phosphate + AMP + H(+). The enzyme catalyses [pyruvate, water dikinase]-phosphate + phosphate + H(+) = [pyruvate, water dikinase] + diphosphate. In terms of biological role, bifunctional serine/threonine kinase and phosphorylase involved in the regulation of the phosphoenolpyruvate synthase (PEPS) by catalyzing its phosphorylation/dephosphorylation. The protein is Putative phosphoenolpyruvate synthase regulatory protein of Photobacterium profundum (strain SS9).